Reading from the N-terminus, the 737-residue chain is Polyribonucleotide nucleotidyltransferase (737 aa).

Residues D489 and D495 each coordinate Mg(2+). The region spanning 556 to 615 (PKIDTIKIDVDKIKIVIGKGGETIDKIIAETGVKIDIDEEGNVSIYSSDQDAINRAKEII) is the KH domain. The S1 motif domain maps to 625–693 (DEVYRAKVVR…EKGRIDASMK (69 aa)). A disordered region spans residues 691–737 (SMKALLPRPPKPEHDEKGEKSERPHRPRHQKDHKPKKEFTETPKDSE). A compositionally biased stretch (basic and acidic residues) spans 700-714 (PKPEHDEKGEKSERP). The segment covering 715-724 (HRPRHQKDHK) has biased composition (basic residues). The span at 725 to 737 (PKKEFTETPKDSE) shows a compositional bias: basic and acidic residues.

The protein belongs to the polyribonucleotide nucleotidyltransferase family. Mg(2+) serves as cofactor.

Its subcellular location is the cytoplasm. The enzyme catalyses RNA(n+1) + phosphate = RNA(n) + a ribonucleoside 5'-diphosphate. Its function is as follows. Involved in mRNA degradation. Catalyzes the phosphorolysis of single-stranded polyribonucleotides processively in the 3'- to 5'-direction. The chain is Polyribonucleotide nucleotidyltransferase from Streptococcus pneumoniae (strain JJA).